A 536-amino-acid polypeptide reads, in one-letter code: CTP synthase (536 aa).

The segment at 1–267 (MSKFVFVTGG…CKETLNYLEL (267 aa)) is amidoligase domain. Ser-13 provides a ligand contact to CTP. Position 13 (Ser-13) interacts with UTP. ATP-binding positions include 14–19 (SIGKGI) and Asp-71. Mg(2+) is bound by residues Asp-71 and Glu-141. CTP-binding positions include 148–150 (DIE), 188–193 (KTKPTQ), and Lys-224. UTP contacts are provided by residues 188–193 (KTKPTQ) and Lys-224. The Glutamine amidotransferase type-1 domain maps to 292 to 534 (KVALVGKYIE…IKASQDKLTQ (243 aa)). Gly-354 lines the L-glutamine pocket. The active-site Nucleophile; for glutamine hydrolysis is Cys-381. L-glutamine is bound by residues 382 to 385 (LGMQ), Glu-405, and Arg-462. Active-site residues include His-507 and Glu-509.

The protein belongs to the CTP synthase family. As to quaternary structure, homotetramer.

It catalyses the reaction UTP + L-glutamine + ATP + H2O = CTP + L-glutamate + ADP + phosphate + 2 H(+). The enzyme catalyses L-glutamine + H2O = L-glutamate + NH4(+). The catalysed reaction is UTP + NH4(+) + ATP = CTP + ADP + phosphate + 2 H(+). It participates in pyrimidine metabolism; CTP biosynthesis via de novo pathway; CTP from UDP: step 2/2. Allosterically activated by GTP, when glutamine is the substrate; GTP has no effect on the reaction when ammonia is the substrate. The allosteric effector GTP functions by stabilizing the protein conformation that binds the tetrahedral intermediate(s) formed during glutamine hydrolysis. Inhibited by the product CTP, via allosteric rather than competitive inhibition. Functionally, catalyzes the ATP-dependent amination of UTP to CTP with either L-glutamine or ammonia as the source of nitrogen. Regulates intracellular CTP levels through interactions with the four ribonucleotide triphosphates. The sequence is that of CTP synthase from Prochlorococcus marinus (strain MIT 9301).